The sequence spans 238 residues: Ribitol-5-phosphate cytidylyltransferase (238 aa).

Residues 7-10 (LAGG) and 81-87 (GDDRNHT) contribute to the CTP site.

It belongs to the IspD/TarI cytidylyltransferase family. TarI subfamily.

It catalyses the reaction D-ribitol 5-phosphate + CTP + H(+) = CDP-L-ribitol + diphosphate. It functions in the pathway cell wall biogenesis; poly(ribitol phosphate) teichoic acid biosynthesis. Its function is as follows. Catalyzes the transfer of the cytidylyl group of CTP to D-ribitol 5-phosphate. In Staphylococcus epidermidis (strain ATCC 35984 / DSM 28319 / BCRC 17069 / CCUG 31568 / BM 3577 / RP62A), this protein is Ribitol-5-phosphate cytidylyltransferase.